The following is a 187-amino-acid chain: Large ribosomal subunit protein uL22 (187 aa).

Basic and acidic residues-rich tracts occupy residues 158–168 and 178–187; these read TKATDESEQAK and RQKEKMMRNE. A disordered region spans residues 158–187; that stretch reads TKATDESEQAKKKLSKKKLQRQKEKMMRNE.

It belongs to the universal ribosomal protein uL22 family.

The sequence is that of Large ribosomal subunit protein uL22 (RpL17) from Anopheles gambiae (African malaria mosquito).